We begin with the raw amino-acid sequence, 369 residues long: MLESIRLYKDLHDFELQGPTRVVEWIGDKSICVAGYDSAKRNEILQLLIPQKLHAKENPGLCPERDLKVEHGGFIDEPVYSLKHIPQSSLIVTSGPASCPLWVWQIGPEDRDVIQPISTLPSDAGKGTWTRIATTTSASPQILHGSQADSIRLTDIESTKQIHTLGVSGSDGVSTLCFLDSRTVFVCCMNGRQFIADIRMPGAASEGRVGEEGLSCVTWCSAVHPSKEDVCSTVASVSSEGHMCLTDPRNLSVPLKCATWCTPIPAASEQFLSICWAPALSDCISVSGFGGSVQIFDTKRWDSAMKEREAVFIHKGHSVMGTCEDGREPTVTAHAWHPWKERTVLSAASDGSLHVWNWSDLPVHDGTEL.

3 WD repeats span residues 74 to 114, 266 to 306, and 326 to 366; these read FIDE…RDVI, AASE…SAMK, and GREP…VHDG.

This sequence belongs to the WD repeat WDR73 family.

Its subcellular location is the cytoplasm. The protein localises to the cytoskeleton. The protein resides in the spindle. It localises to the spindle pole. It is found in the cleavage furrow. In terms of biological role, component of a multiprotein complex required for the assembly of the RNA endonuclease module of the integrator complex. Associates with ints9 and ints11 in the cytoplasm, stabilizing the ints9-ints11 heterodimer and blocking the active site of ints11. Brat1 then joins the complex and plugs the active site of ints11, leading to wdr73 release and nuclear import of ints9 and ints11. In Xenopus laevis (African clawed frog), this protein is Integrator complex assembly factor WDR73 (wdr73).